A 395-amino-acid chain; its full sequence is S-adenosylmethionine synthase (395 aa).

H14 contributes to the ATP binding site. D16 contacts Mg(2+). E42 serves as a coordination point for K(+). The L-methionine site is built by E55 and Q98. Residues 98 to 108 (QSPDIAMGVNK) are flexible loop. ATP-binding positions include 174–176 (DGK), 240–241 (RF), D249, 255–256 (RK), A272, and K276. L-methionine is bound at residue D249. K280 is a binding site for L-methionine.

This sequence belongs to the AdoMet synthase family. Homotetramer; dimer of dimers. It depends on Mg(2+) as a cofactor. K(+) is required as a cofactor.

It is found in the cytoplasm. The enzyme catalyses L-methionine + ATP + H2O = S-adenosyl-L-methionine + phosphate + diphosphate. It functions in the pathway amino-acid biosynthesis; S-adenosyl-L-methionine biosynthesis; S-adenosyl-L-methionine from L-methionine: step 1/1. Functionally, catalyzes the formation of S-adenosylmethionine (AdoMet) from methionine and ATP. The overall synthetic reaction is composed of two sequential steps, AdoMet formation and the subsequent tripolyphosphate hydrolysis which occurs prior to release of AdoMet from the enzyme. This chain is S-adenosylmethionine synthase, found in Caldanaerobacter subterraneus subsp. tengcongensis (strain DSM 15242 / JCM 11007 / NBRC 100824 / MB4) (Thermoanaerobacter tengcongensis).